Here is a 175-residue protein sequence, read N- to C-terminus: MKSGSSTLNPYAAAYVPLSKREGSLVDTKPVTQQHMQQQHHQQQPYYGYGVQGMGSYQGTQMSPKKSPSEMVYNHQLKDEDLEMDMDIEYLLATYPGLSQESINDVYLANTCDLDATIEMLNQLEIYSTEAEEYLPDTLDIGDVPEIITESSKQKNDGSSASSSSGIRNANVSSS.

A PAM2-like motif is present at residues T7–P17. Positions E83–I126 constitute a CUE domain. A disordered region spans residues P145–S175. A compositionally biased stretch (polar residues) spans G166 to S175.

This Arabidopsis thaliana (Mouse-ear cress) protein is Polyadenylate-binding protein-interacting protein 6 (CID6).